Reading from the N-terminus, the 294-residue chain is Acetyl-coenzyme A carboxylase carboxyl transferase subunit beta (294 aa).

Residues 30–294 enclose the CoA carboxyltransferase N-terminal domain; it reads IMTKCPECKK…PETGGESDGE (265 aa). Cys-34, Cys-37, Cys-53, and Cys-56 together coordinate Zn(2+). The C4-type zinc-finger motif lies at 34–56; sequence CPECKKIMYTKELQKNLMVCNYC.

Belongs to the AccD/PCCB family. As to quaternary structure, acetyl-CoA carboxylase is a heterohexamer composed of biotin carboxyl carrier protein (AccB), biotin carboxylase (AccC) and two subunits each of ACCase subunit alpha (AccA) and ACCase subunit beta (AccD). The cofactor is Zn(2+).

The protein localises to the cytoplasm. It catalyses the reaction N(6)-carboxybiotinyl-L-lysyl-[protein] + acetyl-CoA = N(6)-biotinyl-L-lysyl-[protein] + malonyl-CoA. The protein operates within lipid metabolism; malonyl-CoA biosynthesis; malonyl-CoA from acetyl-CoA: step 1/1. Component of the acetyl coenzyme A carboxylase (ACC) complex. Biotin carboxylase (BC) catalyzes the carboxylation of biotin on its carrier protein (BCCP) and then the CO(2) group is transferred by the transcarboxylase to acetyl-CoA to form malonyl-CoA. The sequence is that of Acetyl-coenzyme A carboxylase carboxyl transferase subunit beta from Listeria welshimeri serovar 6b (strain ATCC 35897 / DSM 20650 / CCUG 15529 / CIP 8149 / NCTC 11857 / SLCC 5334 / V8).